Reading from the N-terminus, the 207-residue chain is Urease accessory protein UreG (207 aa).

16 to 23 lines the GTP pocket; the sequence is GPVGSGKT.

The protein belongs to the SIMIBI class G3E GTPase family. UreG subfamily. In terms of assembly, homodimer. UreD, UreF and UreG form a complex that acts as a GTP-hydrolysis-dependent molecular chaperone, activating the urease apoprotein by helping to assemble the nickel containing metallocenter of UreC. The UreE protein probably delivers the nickel.

The protein resides in the cytoplasm. Facilitates the functional incorporation of the urease nickel metallocenter. This process requires GTP hydrolysis, probably effectuated by UreG. The polypeptide is Urease accessory protein UreG (Shewanella halifaxensis (strain HAW-EB4)).